Reading from the N-terminus, the 223-residue chain is Translation initiation factor 6 (223 aa).

This sequence belongs to the eIF-6 family.

Binds to the 50S ribosomal subunit and prevents its association with the 30S ribosomal subunit to form the 70S initiation complex. This is Translation initiation factor 6 from Saccharolobus islandicus (strain M.16.27) (Sulfolobus islandicus).